Consider the following 91-residue polypeptide: Small ribosomal subunit protein uS19 (91 aa).

This sequence belongs to the universal ribosomal protein uS19 family.

In terms of biological role, protein S19 forms a complex with S13 that binds strongly to the 16S ribosomal RNA. The protein is Small ribosomal subunit protein uS19 of Synechococcus sp. (strain RCC307).